We begin with the raw amino-acid sequence, 282 residues long: MATYLIGDVHGCYDELIALLQQVEFTPETDTLWLTGDLVARGPGSLDVLRYVKSLGDSVRLVLGNHDLHLLAVFAGISRNKPKDRLTPLLEAPDADELLNWLRRQPLLQVDEEKKLVMAHAGITPQWDLQTAKECARDVEAVLSSDSYPFFLDAMYGDMPNNWSPELSGLARLRFITNAFTRMRYCFPNGQLDMYSKASPENAPAPLKPWFAIPGPVSEAYSIAFGHWASLDGKGTPDGIYALDTGCCWGGKLTCLRWEDKQYFVQPSNRQMDMGEGEAINA.

The protein belongs to the Ap4A hydrolase family.

The enzyme catalyses P(1),P(4)-bis(5'-adenosyl) tetraphosphate + H2O = 2 ADP + 2 H(+). Hydrolyzes diadenosine 5',5'''-P1,P4-tetraphosphate to yield ADP. The polypeptide is Bis(5'-nucleosyl)-tetraphosphatase, symmetrical (Salmonella arizonae (strain ATCC BAA-731 / CDC346-86 / RSK2980)).